The sequence spans 203 residues: GTP-binding protein rho4 (203 aa).

21–28 (GDGGCGKT) contributes to the GTP binding site. The short motif at 43–51 (YVPTVFENY) is the Effector region element. 70–74 (DTAGQ) is a binding site for GTP. Residue Cys-200 is modified to Cysteine methyl ester. Cys-200 carries S-geranylgeranyl cysteine lipidation. The propeptide at 201–203 (VIL) is removed in mature form.

The protein belongs to the small GTPase superfamily. Rho family.

The protein resides in the membrane. In terms of biological role, required for cell separation. Involved in the regulation of the septum degradation during cytokinesis and in the organization of F-actin patches and cytoplasmic microtubules. The sequence is that of GTP-binding protein rho4 (rho4) from Schizosaccharomyces pombe (strain 972 / ATCC 24843) (Fission yeast).